A 251-amino-acid polypeptide reads, in one-letter code: Uridylate kinase (251 aa).

An ATP-binding site is contributed by 26 to 29 (KLGG). Residue Gly67 coordinates UMP. 2 residues coordinate ATP: Gly68 and Arg72. UMP is bound by residues Asp87 and 148 to 155 (MGLPYFST). The ATP site is built by Phe181 and Asp184.

Belongs to the UMP kinase family. As to quaternary structure, homohexamer.

It is found in the cytoplasm. It catalyses the reaction UMP + ATP = UDP + ADP. It functions in the pathway pyrimidine metabolism; CTP biosynthesis via de novo pathway; UDP from UMP (UMPK route): step 1/1. Its activity is regulated as follows. Inhibited by UTP. In terms of biological role, catalyzes the reversible phosphorylation of UMP to UDP. This is Uridylate kinase from Mycolicibacterium vanbaalenii (strain DSM 7251 / JCM 13017 / BCRC 16820 / KCTC 9966 / NRRL B-24157 / PYR-1) (Mycobacterium vanbaalenii).